The following is a 120-amino-acid chain: Protein EPIDERMAL PATTERNING FACTOR 2 (120 aa).

The signal sequence occupies residues 1 to 25; it reads MTKFVRKYMFCLVLVFAACSLVVNS. Disulfide bonds link C76–C107, C80–C86, C83–C109, and C95–C101.

The protein belongs to the plant cysteine rich small secretory peptide family. Epidermal patterning factor subfamily. Interacts with ERECTA, ERL1 and TMM. In terms of tissue distribution, expressed in leaves, especially by the MMCs and their early descendants cells (stomatal lineage cells) including guard mother cells (GMCs).

The protein resides in the secreted. Functionally, controls stomatal patterning. Regulates the number of cells that enter, and remain in, the stomatal lineage by inhibiting protodermal cells from adopting the meristemoid mother cell (MMC) fate in a non-cell-autonomous manner. Mediates stomatal development inhibition. MEPF2: mobile signal controlling stomatal development in a non-cell-autonomous manner. Uses ERECTA as major receptor. Inactivated by cleavage by CRSP (AC Q9LNU1). May act by competing with somatogen (AC Q9SV72) for the same receptor, TMM (AC Q9SSD1). The sequence is that of Protein EPIDERMAL PATTERNING FACTOR 2 from Arabidopsis thaliana (Mouse-ear cress).